A 474-amino-acid chain; its full sequence is C6 finger domain transcription factor aclZ (474 aa).

Positions 42–69 form a DNA-binding region, zn(2)-C6 fungal-type; the sequence is CNQCHAAKVRCSGERTGCDRCNNLQYQC. Disordered regions lie at residues 85–148 and 177–206; these read RGNK…SHSA and MSSDQDPSRSRGHSLQAPSHSGHSIADSHT. Positions 90–105 are enriched in polar residues; that stretch reads VRTTTEALQRPATAST. Residues 117–138 are compositionally biased toward basic and acidic residues; sequence TDQRSENDPLSRSDFGEQDAAH.

The protein localises to the nucleus. Its function is as follows. Transcription factor that specifically regulates the gene cluster that mediates the biosynthesis of aspirochlorine (or antibiotic A30641), an unusual halogenated spiro compound with distinctive antifungal properties due to selective inhibition of protein biosynthesis, and which is also active against bacteria, viruses, and murine tumor cells. This is C6 finger domain transcription factor aclZ from Aspergillus oryzae (strain ATCC 42149 / RIB 40) (Yellow koji mold).